The chain runs to 422 residues: Gamma-glutamyl phosphate reductase (422 aa).

This sequence belongs to the gamma-glutamyl phosphate reductase family.

It is found in the cytoplasm. The catalysed reaction is L-glutamate 5-semialdehyde + phosphate + NADP(+) = L-glutamyl 5-phosphate + NADPH + H(+). It functions in the pathway amino-acid biosynthesis; L-proline biosynthesis; L-glutamate 5-semialdehyde from L-glutamate: step 2/2. Functionally, catalyzes the NADPH-dependent reduction of L-glutamate 5-phosphate into L-glutamate 5-semialdehyde and phosphate. The product spontaneously undergoes cyclization to form 1-pyrroline-5-carboxylate. The sequence is that of Gamma-glutamyl phosphate reductase from Chloroflexus aurantiacus (strain ATCC 29366 / DSM 635 / J-10-fl).